Consider the following 114-residue polypeptide: Large ribosomal subunit protein uL18 (114 aa).

It belongs to the universal ribosomal protein uL18 family. Part of the 50S ribosomal subunit; part of the 5S rRNA/L5/L18/L25 subcomplex. Contacts the 5S and 23S rRNAs.

Functionally, this is one of the proteins that bind and probably mediate the attachment of the 5S RNA into the large ribosomal subunit, where it forms part of the central protuberance. This is Large ribosomal subunit protein uL18 from Aster yellows phytoplasma.